A 347-amino-acid chain; its full sequence is GMP reductase (347 aa).

108 to 131 (ADFEKTKQILDLNPALNFVCIDVA) serves as a coordination point for NADP(+). K(+) contacts are provided by glycine 181 and glycine 183. Cysteine 186 serves as the catalytic Thioimidate intermediate. Residue 216–239 (IVSDGGCTTPGDVAKAFGGGADFV) participates in NADP(+) binding.

It belongs to the IMPDH/GMPR family. GuaC type 1 subfamily. In terms of assembly, homotetramer.

It carries out the reaction IMP + NH4(+) + NADP(+) = GMP + NADPH + 2 H(+). In terms of biological role, catalyzes the irreversible NADPH-dependent deamination of GMP to IMP. It functions in the conversion of nucleobase, nucleoside and nucleotide derivatives of G to A nucleotides, and in maintaining the intracellular balance of A and G nucleotides. The protein is GMP reductase of Shigella dysenteriae serotype 1 (strain Sd197).